Reading from the N-terminus, the 428-residue chain is Flap endonuclease 1-B (428 aa).

The interval 1-132 (MGIKGLTKVL…KELAKRSLKR (132 aa)) is N-domain. Mg(2+) is bound at residue Asp34. A DNA-binding site is contributed by Arg98. Residues Asp114, Glu186, Glu188, Asp207, and Asp209 each coordinate Mg(2+). Positions 150–281 (AVEKFSKRTV…QRALKLIRQH (132 aa)) are I-domain. DNA is bound at residue Glu186. The DNA site is built by Gly259 and Asp261. Asp261 is a binding site for Mg(2+).

This sequence belongs to the XPG/RAD2 endonuclease family. FEN1 subfamily. In terms of assembly, interacts with PCNA. Three molecules of FEN1 bind to one PCNA trimer with each molecule binding to one PCNA monomer. PCNA stimulates the nuclease activity without altering cleavage specificity. The cofactor is Mg(2+). In terms of processing, phosphorylated. Phosphorylation upon DNA damage induces relocalization to the nuclear plasma.

Its subcellular location is the nucleus. The protein resides in the nucleolus. It localises to the nucleoplasm. The protein localises to the mitochondrion. Its function is as follows. Structure-specific nuclease with 5'-flap endonuclease and 5'-3' exonuclease activities involved in DNA replication and repair. During DNA replication, cleaves the 5'-overhanging flap structure that is generated by displacement synthesis when DNA polymerase encounters the 5'-end of a downstream Okazaki fragment. It enters the flap from the 5'-end and then tracks to cleave the flap base, leaving a nick for ligation. Also involved in the long patch base excision repair (LP-BER) pathway, by cleaving within the apurinic/apyrimidinic (AP) site-terminated flap. Acts as a genome stabilization factor that prevents flaps from equilibrating into structures that lead to duplications and deletions. Also possesses 5'-3' exonuclease activity on nicked or gapped double-stranded DNA, and exhibits RNase H activity. Also involved in replication and repair of rDNA and in repairing mitochondrial DNA. This is Flap endonuclease 1-B from Sorghum bicolor (Sorghum).